The sequence spans 97 residues: MSVEEDATVREPLDLIRLSIEERIYVKLRSDRELRGKLHAFDQHLNMILGDVEEVITTIEIDDETYEEIVRTTKRTVPFLFVRGDGVILVSPPLRTT.

N-acetylserine is present on Ser2. A Sm domain is found at 11-96; it reads EPLDLIRLSI…VILVSPPLRT (86 aa).

The protein belongs to the snRNP Sm proteins family. Component of the heptameric LSM1-LSM7 complex that forms a seven-membered ring structure with a donut shape. The LSM subunits are arranged in the order LSM1, LSM2, LSM3, LSM6, LSM5, LSM7 and LSM4. Component of the heptameric LSM2-LSM8 complex that forms a seven-membered ring structure with a donut shape. The LSM subunits are arranged in the order LSM8, LSM2, LSM3, LSM6, LSM5, LSM7 and LSM4. LSM3A subunit interacts only with its two neighboring subunits, LSM2 and LSM6A or LSM6B. Expressed in roots, leaves, stems, flowers and siliques.

The protein resides in the cytoplasm. It is found in the nucleus. Component of LSM protein complexes, which are involved in RNA processing. Component of the cytoplasmic LSM1-LSM7 complex which is involved in mRNA degradation by promoting decapping and leading to accurate 5'-3' mRNA decay. The cytoplasmic LSM1-LSM7 complex regulates developmental gene expression by the decapping of specific development-related transcripts. Component of the nuclear LSM2-LSM8 complex which is involved splicing nuclear mRNAs. LSM2-LSM8 binds directly to the U6 small nuclear RNAs (snRNAs) and is essential for accurate splicing of selected development-related mRNAs through the stabilization of the spliceosomal U6 snRNA. Plays a critical role in the regulation of development-related gene expression. The polypeptide is Sm-like protein LSM3A (Arabidopsis thaliana (Mouse-ear cress)).